Here is a 711-residue protein sequence, read N- to C-terminus: Early transcription factor 82 kDa subunit (711 aa).

The protein belongs to the poxviridae VETF large subunit family. Heterodimer of a 70 kDa and a 82 kDa subunit. Part of the early transcription complex composed of ETF, RAP94, and the DNA-directed RNA polymerase.

It localises to the virion. In terms of biological role, acts with RNA polymerase to initiate transcription from early gene promoters. Is recruited by the RPO-associated protein of 94 kDa (RAP94) to form the early transcription complex, which also contains the core RNA polymerase. ETF heterodimer binds to early gene promoters. This Oryctolagus cuniculus (Rabbit) protein is Early transcription factor 82 kDa subunit (VETFL).